Reading from the N-terminus, the 157-residue chain is Endoribonuclease YbeY (157 aa).

Positions 113, 117, and 123 each coordinate Zn(2+).

This sequence belongs to the endoribonuclease YbeY family. Requires Zn(2+) as cofactor.

Its subcellular location is the cytoplasm. Single strand-specific metallo-endoribonuclease involved in late-stage 70S ribosome quality control and in maturation of the 3' terminus of the 16S rRNA. This Ehrlichia ruminantium (strain Gardel) protein is Endoribonuclease YbeY.